The following is a 115-amino-acid chain: Tyrosine-protein phosphatase 24 (115 aa).

Positions 1 to 115 (WMMIVEQKCR…ETGSDAPMVV (115 aa)) constitute a Tyrosine-protein phosphatase domain. Asp83 is a substrate binding site.

This sequence belongs to the protein-tyrosine phosphatase family.

The enzyme catalyses O-phospho-L-tyrosyl-[protein] + H2O = L-tyrosyl-[protein] + phosphate. The protein is Tyrosine-protein phosphatase 24 (STY-24) of Styela plicata (Wrinkled sea squirt).